Reading from the N-terminus, the 379-residue chain is Glutamate 5-kinase (379 aa).

K17 serves as a coordination point for ATP. Residues S57, D144, and N156 each coordinate substrate. 176–177 (SD) serves as a coordination point for ATP. The PUA domain maps to 282 to 359 (SGILMIDQGA…EEIESILGYE (78 aa)).

Belongs to the glutamate 5-kinase family.

It is found in the cytoplasm. It carries out the reaction L-glutamate + ATP = L-glutamyl 5-phosphate + ADP. It functions in the pathway amino-acid biosynthesis; L-proline biosynthesis; L-glutamate 5-semialdehyde from L-glutamate: step 1/2. In terms of biological role, catalyzes the transfer of a phosphate group to glutamate to form L-glutamate 5-phosphate. The protein is Glutamate 5-kinase of Bartonella henselae (strain ATCC 49882 / DSM 28221 / CCUG 30454 / Houston 1) (Rochalimaea henselae).